We begin with the raw amino-acid sequence, 304 residues long: Oxygen-dependent coproporphyrinogen-III oxidase (304 aa).

S93 lines the substrate pocket. Residues H97 and H107 each contribute to the a divalent metal cation site. H107 functions as the Proton donor in the catalytic mechanism. 109 to 111 lines the substrate pocket; it reads NVR. Residues H146 and H176 each contribute to the a divalent metal cation site. The segment at 241 to 276 is important for dimerization; the sequence is YVEFNLVYDRGTLFGLQSGGRTESILMSLPPQVRWG. 259–261 lines the substrate pocket; that stretch reads GGR.

The protein belongs to the aerobic coproporphyrinogen-III oxidase family. Homodimer. A divalent metal cation serves as cofactor.

It localises to the cytoplasm. It carries out the reaction coproporphyrinogen III + O2 + 2 H(+) = protoporphyrinogen IX + 2 CO2 + 2 H2O. Its pathway is porphyrin-containing compound metabolism; protoporphyrin-IX biosynthesis; protoporphyrinogen-IX from coproporphyrinogen-III (O2 route): step 1/1. Functionally, involved in the heme biosynthesis. Catalyzes the aerobic oxidative decarboxylation of propionate groups of rings A and B of coproporphyrinogen-III to yield the vinyl groups in protoporphyrinogen-IX. This is Oxygen-dependent coproporphyrinogen-III oxidase from Pseudomonas syringae pv. tomato (strain ATCC BAA-871 / DC3000).